Consider the following 114-residue polypeptide: MDRVTRLASQKAVVVFSKSSCGMSHAVTRLLRELGVDARVVELDEEPAGADMENALAGMLLAGTAANGGGRGRGVVVPTVFIGGRLVGSTDRVMSLHVAGGLVPLLRDAGALWV.

In terms of domain architecture, Glutaredoxin spans 1-113; that stretch reads MDRVTRLASQ…PLLRDAGALW (113 aa). [2Fe-2S] cluster is bound at residue C21.

It belongs to the glutaredoxin family. CC-type subfamily.

It localises to the cytoplasm. Its function is as follows. May only reduce GSH-thiol disulfides, but not protein disulfides. The polypeptide is Monothiol glutaredoxin-S8 (GRXS8) (Oryza sativa subsp. japonica (Rice)).